The following is a 547-amino-acid chain: Chaperonin GroEL 1 (547 aa).

ATP-binding positions include 30–33, lysine 51, 87–91, glycine 415, 479–481, and aspartate 495; these read TLGP, DGTTT, and NAA. Positions 525–547 are disordered; that stretch reads PKKKGAPAGGGMGGMGGMDEMDY. Over residues 531–541 the composition is skewed to gly residues; it reads PAGGGMGGMGG.

This sequence belongs to the chaperonin (HSP60) family. In terms of assembly, forms a cylinder of 14 subunits composed of two heptameric rings stacked back-to-back. Interacts with the co-chaperonin GroES.

The protein localises to the cytoplasm. The catalysed reaction is ATP + H2O + a folded polypeptide = ADP + phosphate + an unfolded polypeptide.. Its function is as follows. Together with its co-chaperonin GroES, plays an essential role in assisting protein folding. The GroEL-GroES system forms a nano-cage that allows encapsulation of the non-native substrate proteins and provides a physical environment optimized to promote and accelerate protein folding. The chain is Chaperonin GroEL 1 from Anaeromyxobacter sp. (strain Fw109-5).